A 259-amino-acid chain; its full sequence is Protein unc-50 homolog (259 aa).

An N-acetylmethionine modification is found at Met1. Topologically, residues 1–82 (MLPSTSLSSS…TKDQWARDDP (82 aa)) are cytoplasmic. At Ser6 the chain carries Phosphoserine. Residues 83–103 (AFLVLLSIWLCVSTIGFGFVL) traverse the membrane as a helical segment. Residues 104–112 (DMGFFETIK) are Lumenal-facing. The chain crosses the membrane as a helical span at residues 113–133 (LLLWVVFIDCVGVGLLISTLM). At 134-163 (WFVSNKYLVKRQSRDYDVEWGYAFDVHLNA) the chain is on the cytoplasmic side. Residues 164–184 (FYPLLVILHFIQLFFINHVIL) traverse the membrane as a helical segment. Residues 185 to 187 (TDT) lie on the Lumenal side of the membrane. The helical transmembrane segment at 188-208 (FIGYLVGNTLWLIAVGYYIYV) threads the bilayer. The Cytoplasmic portion of the chain corresponds to 209-222 (TFLGYSALPFLKNT). The chain crosses the membrane as a helical span at residues 223–243 (VILLYPFAPLMVLYGLSLALG). Topologically, residues 244 to 259 (WNFTHTLCSFYKYRVK) are lumenal.

The protein belongs to the unc-50 family. As to expression, highly expressed in periodontal ligament and bone marrow, but not in gingival fibroblasts.

It localises to the nucleus inner membrane. Its subcellular location is the golgi apparatus membrane. Its function is as follows. Involved in the cell surface expression of neuronal nicotinic receptors. Binds RNA. This chain is Protein unc-50 homolog (Unc50), found in Mus musculus (Mouse).